A 247-amino-acid polypeptide reads, in one-letter code: Type II restriction enzyme SmaI (247 aa).

The cofactor is Mg(2+). It depends on K(+) as a cofactor.

It catalyses the reaction Endonucleolytic cleavage of DNA to give specific double-stranded fragments with terminal 5'-phosphates.. Its function is as follows. A P subtype restriction enzyme that recognizes the double-stranded sequence 5'-CCCGGG-3' and cleaves after C-3. The polypeptide is Type II restriction enzyme SmaI (smaIR) (Serratia marcescens).